The following is a 127-amino-acid chain: Large ribosomal subunit protein bL19 (127 aa).

This sequence belongs to the bacterial ribosomal protein bL19 family.

Functionally, this protein is located at the 30S-50S ribosomal subunit interface and may play a role in the structure and function of the aminoacyl-tRNA binding site. The chain is Large ribosomal subunit protein bL19 from Trichodesmium erythraeum (strain IMS101).